The primary structure comprises 90 residues: Sec-independent protein translocase protein TatA (90 aa).

A helical transmembrane segment spans residues 1 to 21 (MGGASIWHWIVVGVIVMLLFG). The disordered stretch occupies residues 42–90 (GMADEDQPQAPVANQSPPPVSATEPVRTLPPHQGEPAPAANASVDRKVG).

It belongs to the TatA/E family. The Tat system comprises two distinct complexes: a TatABC complex, containing multiple copies of TatA, TatB and TatC subunits, and a separate TatA complex, containing only TatA subunits. Substrates initially bind to the TatABC complex, which probably triggers association of the separate TatA complex to form the active translocon.

The protein localises to the cell inner membrane. Its function is as follows. Part of the twin-arginine translocation (Tat) system that transports large folded proteins containing a characteristic twin-arginine motif in their signal peptide across membranes. TatA could form the protein-conducting channel of the Tat system. This is Sec-independent protein translocase protein TatA from Methylobacterium nodulans (strain LMG 21967 / CNCM I-2342 / ORS 2060).